We begin with the raw amino-acid sequence, 442 residues long: Exodeoxyribonuclease 7 large subunit (442 aa).

It belongs to the XseA family. In terms of assembly, heterooligomer composed of large and small subunits.

It is found in the cytoplasm. The enzyme catalyses Exonucleolytic cleavage in either 5'- to 3'- or 3'- to 5'-direction to yield nucleoside 5'-phosphates.. In terms of biological role, bidirectionally degrades single-stranded DNA into large acid-insoluble oligonucleotides, which are then degraded further into small acid-soluble oligonucleotides. This chain is Exodeoxyribonuclease 7 large subunit, found in Shewanella woodyi (strain ATCC 51908 / MS32).